The sequence spans 473 residues: 7-dehydrocholesterol reductase (473 aa).

Positions 1 to 20 are disordered; it reads MGERRRANASRGDKKVANGE. 6 helical membrane-spanning segments follow: residues 36 to 56, 97 to 117, 175 to 195, 264 to 284, 304 to 324, and 329 to 349; these read FSLA…YYFV, IYLA…DILH, WIPL…FALV, VTNS…DFFW, LGWG…LYLV, and ELST…YYIF. Residues K356, R360, M393, W398, and 405–406 each bind NADP(+); that span reads NY. Residues 419-439 form a helical membrane-spanning segment; the sequence is ACGFDHLLPYFYFIYMTILLV. NADP(+) contacts are provided by residues D445, 449–453, and Y460; that span reads CSSKY.

The protein belongs to the ERG4/ERG24 family.

Its subcellular location is the endoplasmic reticulum membrane. It carries out the reaction cholesterol + NADP(+) = 7-dehydrocholesterol + NADPH + H(+). The catalysed reaction is 7-dehydrodesmosterol + NADPH + H(+) = desmosterol + NADP(+). It functions in the pathway steroid biosynthesis; cholesterol biosynthesis. In terms of biological role, catalyzes the last step of the cholesterol synthesis pathway, which transforms cholesta-5,7-dien-3beta-ol (7-dehydrocholesterol,7-DHC) into cholesterol by reducing the C7-C8 double bond of its sterol core. Can also metabolize cholesta-5,7,24-trien-3beta-ol (7-dehydrodemosterol, 7-DHD) to desmosterol, which is then metabolized by the Delta(24)-sterol reductase (DHCR24) to cholesterol. Modulates ferroptosis (a form of regulated cell death driven by iron-dependent lipid peroxidation) through the metabolic breakdown of the anti-ferroptotic metabolites 7-DHC and 7-DHD which, when accumulated, divert the propagation of peroxyl radical-mediated damage from phospholipid components to its sterol core, protecting plasma and mitochondrial membranes from phospholipid autoxidation. This chain is 7-dehydrocholesterol reductase (dhcr7), found in Xenopus laevis (African clawed frog).